Here is a 227-residue protein sequence, read N- to C-terminus: ATP-dependent dethiobiotin synthetase BioD (227 aa).

13–18 contacts ATP; that stretch reads DIGKTY. Thr17 lines the Mg(2+) pocket. Lys38 is an active-site residue. Ser42 provides a ligand contact to substrate. Residues Asp55, 116–119, and 179–180 contribute to the ATP site; these read EGSG and NN. Mg(2+) contacts are provided by Asp55 and Glu116.

Belongs to the dethiobiotin synthetase family. As to quaternary structure, homodimer. Requires Mg(2+) as cofactor.

The protein localises to the cytoplasm. It carries out the reaction (7R,8S)-7,8-diammoniononanoate + CO2 + ATP = (4R,5S)-dethiobiotin + ADP + phosphate + 3 H(+). Its pathway is cofactor biosynthesis; biotin biosynthesis; biotin from 7,8-diaminononanoate: step 1/2. Functionally, catalyzes a mechanistically unusual reaction, the ATP-dependent insertion of CO2 between the N7 and N8 nitrogen atoms of 7,8-diaminopelargonic acid (DAPA, also called 7,8-diammoniononanoate) to form a ureido ring. In Clostridium botulinum (strain Okra / Type B1), this protein is ATP-dependent dethiobiotin synthetase BioD.